We begin with the raw amino-acid sequence, 587 residues long: MQRSTMLPGVELLLLFLLSTSLHAEISHLPMASNRIILDSTELLQNPLIQDAGVPAARATPLPPQKCPSLQRYRKMLKDFDDLEDLYVDVPVHIALAERQRKRFVLNLNDSTPLTIRFSAPVGRKMYYNQTGNPLRPAAVAPGPGVAVGSLVLPCALRGQYDLFVLARHSGALKVDALAEHPQHDWPLLNATHRIAIRTQNRVRKREMIVKWERSKFDFHVMHYCLVIQRLSMDTPRMIFTNFCQAVSAYTDQQPMTPSCAAGGPLEGIWGAPPQRERRLNPRQNVHIVCTGKRRQQLLRRLLPRSSYHLDLFGIHQGRQNLTLRLASSQVNFNRTQPLALKQQALMQLKIGGQHGKQVYSFKVPQTTRQLGEPFMRHLLIPCSGSEIRVKLLRQRSEVGKTEAFYSPTYIRQKGVLPGERYLMRFEPSNDDEALRAQKVMVALSSEALFRDLPELPQNTTVFNVRTRCSRATIAWNGSPDERELSYCIIVFNLPQRNRSVVDFTNYCMDFVPKRVMQYRYFEWMTCRERQQSPDNIETETILNLMPGSSYLVYVTANLSMGKPLPYQALTLHMASQCLDGSHESFY.

Positions 1–24 (MQRSTMLPGVELLLLFLLSTSLHA) are cleaved as a signal peptide. Residues N109, N129, N190, N321, N334, N459, N498, and N558 are each glycosylated (N-linked (GlcNAc...) asparagine).

In terms of assembly, binds heparin. Interacts with dally; the interaction promotes dally degradation. Interacts with dpp and gbb.

The protein resides in the secreted. Its subcellular location is the extracellular space. It localises to the extracellular matrix. In terms of biological role, secretory protein that acts as a feedback regulator of dpp/BMP, wg and hh signaling pathways. In the developing wing, is a dosage-dependent modulator of dpp/BMP signaling involved in wing growth and crossvein patterning; low levels promote and high levels inhibit dpp/BMP signaling. In the early pupal wing, inhibits dpp/BMP signaling activity to prevent the formation of ectopic crossveins in the posterior compartment. Binds to dpp and gbb to modulate their release and activity decreasing dpp/BMP signaling in the responding cells. During wing development regulates dpp/BMP coreceptor dally availability on the cell surface. Might have a role in testis development. In Drosophila melanogaster (Fruit fly), this protein is Protein NDNF.